The following is a 157-amino-acid chain: Phosphopantetheine adenylyltransferase (157 aa).

Residue Thr8 coordinates substrate. ATP-binding positions include 8–9 and His16; that span reads TF. Positions 40, 72, and 86 each coordinate substrate. Residues 87 to 89, Glu97, and 122 to 128 contribute to the ATP site; these read GLR and YSFLSSS.

This sequence belongs to the bacterial CoaD family. Homohexamer. Requires Mg(2+) as cofactor.

It localises to the cytoplasm. It catalyses the reaction (R)-4'-phosphopantetheine + ATP + H(+) = 3'-dephospho-CoA + diphosphate. The protein operates within cofactor biosynthesis; coenzyme A biosynthesis; CoA from (R)-pantothenate: step 4/5. In terms of biological role, reversibly transfers an adenylyl group from ATP to 4'-phosphopantetheine, yielding dephospho-CoA (dPCoA) and pyrophosphate. This is Phosphopantetheine adenylyltransferase from Prochlorococcus marinus (strain AS9601).